Reading from the N-terminus, the 155-residue chain is 6,7-dimethyl-8-ribityllumazine synthase (155 aa).

Residues Phe22, 56–58, and 80–82 contribute to the 5-amino-6-(D-ribitylamino)uracil site; these read AFE and AVI. 85-86 contacts (2S)-2-hydroxy-3-oxobutyl phosphate; the sequence is AT. The active-site Proton donor is the His88. Residue Phe113 coordinates 5-amino-6-(D-ribitylamino)uracil. Arg127 serves as a coordination point for (2S)-2-hydroxy-3-oxobutyl phosphate.

Belongs to the DMRL synthase family.

It carries out the reaction (2S)-2-hydroxy-3-oxobutyl phosphate + 5-amino-6-(D-ribitylamino)uracil = 6,7-dimethyl-8-(1-D-ribityl)lumazine + phosphate + 2 H2O + H(+). The protein operates within cofactor biosynthesis; riboflavin biosynthesis; riboflavin from 2-hydroxy-3-oxobutyl phosphate and 5-amino-6-(D-ribitylamino)uracil: step 1/2. Functionally, catalyzes the formation of 6,7-dimethyl-8-ribityllumazine by condensation of 5-amino-6-(D-ribitylamino)uracil with 3,4-dihydroxy-2-butanone 4-phosphate. This is the penultimate step in the biosynthesis of riboflavin. The sequence is that of 6,7-dimethyl-8-ribityllumazine synthase from Clostridium acetobutylicum (strain ATCC 824 / DSM 792 / JCM 1419 / IAM 19013 / LMG 5710 / NBRC 13948 / NRRL B-527 / VKM B-1787 / 2291 / W).